We begin with the raw amino-acid sequence, 87 residues long: Large ribosomal subunit protein uL23c (87 aa).

The protein belongs to the universal ribosomal protein uL23 family. Part of the 50S ribosomal subunit.

Its subcellular location is the plastid. It is found in the chloroplast. In terms of biological role, binds to 23S rRNA. This is Large ribosomal subunit protein uL23c (rpl23) from Bigelowiella natans (Pedinomonas minutissima).